The sequence spans 620 residues: Long-chain fatty acid transport protein 2 (620 aa).

Topologically, residues 1 to 4 (MLPV) are lumenal. Residues 5–27 (LYTGLAGLLLLPLLLTCCCPYLL) traverse the membrane as a helical segment. Topologically, residues 28 to 106 (QDVRFFLQLA…DHLGLRQGDC (79 aa)) are cytoplasmic. A helical membrane pass occupies residues 107–127 (VALFMGNEPAYVWLWLGLLKL). At 128–267 (GCPMACLNYN…DVIYTTMPLY (140 aa)) the chain is on the lumenal side. Residue 222-233 (YIYTSGTTGLPK) participates in AMP binding. The chain crosses the membrane as a helical span at residues 268-288 (HSAALMIGLHGCIVVGATFAL). Over 289–620 (RSKFSASQFW…NAIIDKTLKL (332 aa)) the chain is Cytoplasmic. The residue at position 291 (lysine 291) is an N6-acetyllysine. Phosphothreonine is present on threonine 577.

This sequence belongs to the ATP-dependent AMP-binding enzyme family. Liver and kidney (at protein level).

The protein localises to the endoplasmic reticulum membrane. The protein resides in the peroxisome membrane. It is found in the cell membrane. Its subcellular location is the microsome. The catalysed reaction is a fatty acid(in) = a fatty acid(out). It carries out the reaction (9Z)-octadecenoate(out) = (9Z)-octadecenoate(in). The enzyme catalyses a long-chain fatty acid + ATP + CoA = a long-chain fatty acyl-CoA + AMP + diphosphate. It catalyses the reaction (5Z,8Z,11Z,14Z)-eicosatetraenoate + ATP + CoA = (5Z,8Z,11Z,14Z)-eicosatetraenoyl-CoA + AMP + diphosphate. The catalysed reaction is (9Z,12Z,15Z)-octadecatrienoate + ATP + CoA = (9Z,12Z,15Z)-octadecatrienoyl-CoA + AMP + diphosphate. It carries out the reaction hexadecanoate + ATP + CoA = hexadecanoyl-CoA + AMP + diphosphate. The enzyme catalyses (9Z)-octadecenoate + ATP + CoA = (9Z)-octadecenoyl-CoA + AMP + diphosphate. It catalyses the reaction 2,6,10,14-tetramethylpentadecanoate + ATP + CoA = pristanoyl-CoA + AMP + diphosphate. The catalysed reaction is (E)-hexadec-2-enoate + ATP + CoA = (2E)-hexadecenoyl-CoA + AMP + diphosphate. It carries out the reaction 3,7,11,15-tetramethylhexadecanoate + ATP + CoA = phytanoyl-CoA + AMP + diphosphate. The enzyme catalyses a very long-chain fatty acid + ATP + CoA = a very long-chain fatty acyl-CoA + AMP + diphosphate. It catalyses the reaction tetracosanoate + ATP + CoA = tetracosanoyl-CoA + AMP + diphosphate. The catalysed reaction is (4Z,7Z,10Z,13Z,16Z,19Z)-docosahexaenoate + ATP + CoA = (4Z,7Z,10Z,13Z,16Z,19Z)-docosahexaenoyl-CoA + AMP + diphosphate. It carries out the reaction (25R)-3alpha,7alpha,12alpha-trihydroxy-5beta-cholestan-26-oate + ATP + CoA = (25R)-3alpha,7alpha,12alpha-trihydroxy-5beta-cholestan-26-oyl-CoA + AMP + diphosphate. Its function is as follows. Mediates the import of long-chain fatty acids (LCFA) into the cell by facilitating their transport across cell membranes, playing an important role in hepatic fatty acid uptake. Also functions as an acyl-CoA ligase catalyzing the ATP-dependent formation of fatty acyl-CoA using LCFA and very-long-chain fatty acids (VLCFA) as substrates, which prevents fatty acid efflux from cells and might drive more fatty acid uptake. Plays a pivotal role in regulating available LCFA substrates from exogenous sources in tissues undergoing high levels of beta-oxidation or triglyceride synthesis. Can also activate branched-chain fatty acids such as phytanic acid and pristanic acid. May contribute to the synthesis of sphingosine-1-phosphate. Does not activate C24 bile acids, cholate and chenodeoxycholate. In vitro, activates 3-alpha,7-alpha,12-alpha-trihydroxy-5-beta-cholestanate (THCA), the C27 precursor of cholic acid deriving from the de novo synthesis from cholesterol. However, it is not critical for THCA activation and bile synthesis in vivo. The polypeptide is Long-chain fatty acid transport protein 2 (Slc27a2) (Rattus norvegicus (Rat)).